The chain runs to 400 residues: Ribosomal RNA large subunit methyltransferase I (400 aa).

In terms of domain architecture, PUA spans 6–84; that stretch reads FPRLVLAKGR…NEAIDSAFFE (79 aa).

Belongs to the methyltransferase superfamily. RlmI family.

The protein resides in the cytoplasm. It carries out the reaction cytidine(1962) in 23S rRNA + S-adenosyl-L-methionine = 5-methylcytidine(1962) in 23S rRNA + S-adenosyl-L-homocysteine + H(+). In terms of biological role, specifically methylates the cytosine at position 1962 (m5C1962) of 23S rRNA. This is Ribosomal RNA large subunit methyltransferase I from Klebsiella pneumoniae (strain 342).